The primary structure comprises 336 residues: Aromatic prenyltransferase (336 aa).

This sequence belongs to the aromatic prenyltransferase family.

In terms of biological role, prenyltransferase that attaches isoprenoid moieties to carbon atoms of aromatic substrates in an enzyme-catalyzed Friedel-Crafts reaction. Shows specificity for dimethylallyl diphosphate (DMAPP) and does not accept geranyl diphosphate (GPP) or isopentenyl diphosphate (IPP). Prenylates the artificial substrate 2,7-dihydroxynaphthalene (2,7-DHN), as well as dihydrophenazine-1-carboxylic acid at a lower level. Only traces of products are detected with aspulvinone E, flaviolin, or 4-hydroxybenzoic acid as substrates; and no product is formed with L-tryptophan, L-tyrosine, or 4-hydroxyphenylpyruvate. Ptf seems no to be involved in the prenylation reaction in the biosynthesis of aspulvinone H and J and the physiological function of ptf remains unknown. The sequence is that of Aromatic prenyltransferase from Aspergillus terreus (strain NIH 2624 / FGSC A1156).